We begin with the raw amino-acid sequence, 591 residues long: Aspartate--tRNA ligase (591 aa).

An L-aspartate-binding site is contributed by Glu175. The interval 199–202 (QLFK) is aspartate. Residue Arg221 coordinates L-aspartate. Residues 221-223 (RDE) and Gln230 contribute to the ATP site. His449 provides a ligand contact to L-aspartate. Glu483 contributes to the ATP binding site. Arg490 lines the L-aspartate pocket. 535–538 (GLDR) lines the ATP pocket.

The protein belongs to the class-II aminoacyl-tRNA synthetase family. Type 1 subfamily. In terms of assembly, homodimer.

Its subcellular location is the cytoplasm. It catalyses the reaction tRNA(Asp) + L-aspartate + ATP = L-aspartyl-tRNA(Asp) + AMP + diphosphate. Its function is as follows. Catalyzes the attachment of L-aspartate to tRNA(Asp) in a two-step reaction: L-aspartate is first activated by ATP to form Asp-AMP and then transferred to the acceptor end of tRNA(Asp). The sequence is that of Aspartate--tRNA ligase from Oceanobacillus iheyensis (strain DSM 14371 / CIP 107618 / JCM 11309 / KCTC 3954 / HTE831).